The chain runs to 326 residues: Protein spaetzle (326 aa).

A signal peptide spans Met-1–Ala-25. Asn-48 carries an N-linked (GlcNAc...) asparagine glycan. The tract at residues Phe-56–Thr-82 is disordered. The span at Lys-69–Pro-80 shows a compositional bias: polar residues. Asn-114 and Asn-164 each carry an N-linked (GlcNAc...) asparagine glycan. The interval Tyr-152 to Lys-174 is disordered. Positions Leu-162–Lys-174 are enriched in basic and acidic residues. The region spanning Phe-228–Ala-322 is the Spaetzle domain. Disulfide bonds link Cys-230/Cys-288, Cys-267/Cys-319, and Cys-274/Cys-321.

Homodimer; disulfide-linked. In the presence of Tl, crystal structures show one Tl molecule bound to a spaetzle C-106 homodimer. However, the active complex probably consists of two Tl molecules bound to a spaetzle C-106 homodimer. This is supported by in vitro experiments which also show binding of the spaetzle C-106 dimer to 2 Tl receptors. Ligand binding induces conformational changes in the extracellular domain of Tl. This may enable a secondary homodimerization interface at the C-terminus of the Tl extracellular domain. During embryonic development proteolytically processed by activated ea/easter; ea cleaves the signal peptide and also generates the C-terminal 12 kDa active ligand for the Toll receptor, C-106 (except for isoform 8.24 and isoform 11.27 as they do not contain the cleavage site). During the immune response, cleaved in the same manner by SPE. Post-translationally, extracellular forms of isoform 8.19 and isoform 11.7 are glycosylated.

It is found in the secreted. In terms of biological role, the activated form, spaetzle C-106, acts as a ligand for the Toll receptor. Binding to Toll activates the Toll signaling pathway and induces expression of the antifungal peptide drosomycin. Component of the extracellular signaling pathway that establishes dorsal-ventral polarity in the embryo. This chain is Protein spaetzle, found in Drosophila melanogaster (Fruit fly).